The sequence spans 184 residues: UPF0398 protein BCB4264_A1614 (184 aa).

The protein belongs to the UPF0398 family.

The chain is UPF0398 protein BCB4264_A1614 from Bacillus cereus (strain B4264).